The following is a 72-amino-acid chain: Disintegrin sasaimin (72 aa).

The Disintegrin domain maps to 1 to 72 (EAGEECDCGA…SAGCPRNPFH (72 aa)). Intrachain disulfides connect Cys6/Cys21, Cys8/Cys16, Cys15/Cys38, Cys29/Cys35, Cys34/Cys59, and Cys47/Cys66. The Cell attachment site signature appears at 51 to 53 (RGD).

It belongs to the venom metalloproteinase (M12B) family. P-II subfamily. P-IIa sub-subfamily. As to quaternary structure, monomer. In terms of tissue distribution, expressed by the venom gland.

The protein localises to the secreted. Inhibits ADP- (IC(50)=66 nM) and collagen-induced (IC(50)=100 nM) aggregation of human platelets. In vitro, inhibits adhesion of endothelial cells to vitronectin, type-I collagen and, to a lower degree, fibronectin and laminin. This chain is Disintegrin sasaimin, found in Cerrophidion sasai (Costa Rica montane pitviper).